Reading from the N-terminus, the 274-residue chain is Large ribosomal subunit protein uL2 (274 aa).

Positions 195 to 274 (VGNSDHGLES…SKYIIERRKK (80 aa)) are disordered. Basic residues-rich tracts occupy residues 209–220 (GRSRWQGRRPRN) and 244–264 (PRSR…KKQS).

This sequence belongs to the universal ribosomal protein uL2 family. Part of the 50S ribosomal subunit. Forms a bridge to the 30S subunit in the 70S ribosome.

In terms of biological role, one of the primary rRNA binding proteins. Required for association of the 30S and 50S subunits to form the 70S ribosome, for tRNA binding and peptide bond formation. It has been suggested to have peptidyltransferase activity; this is somewhat controversial. Makes several contacts with the 16S rRNA in the 70S ribosome. The chain is Large ribosomal subunit protein uL2 from Bacteroides fragilis (strain ATCC 25285 / DSM 2151 / CCUG 4856 / JCM 11019 / LMG 10263 / NCTC 9343 / Onslow / VPI 2553 / EN-2).